The following is an 887-amino-acid chain: Endoglucanase 1 (887 aa).

An N-terminal signal peptide occupies residues 1 to 55 (MRLVNSLGRRKILLILAVIVAFSTVLLFAKLWGRKTSSTLDEVGSKTHGDLTAEN). The disordered stretch occupies residues 40 to 66 (LDEVGSKTHGDLTAENKNGGYLPEEEI). Residues 43-53 (VGSKTHGDLTA) show a composition bias toward basic and acidic residues. Residues 56–518 (KNGGYLPEEE…AKMYKLYGGS (463 aa)) form a catalytic region. Residue D131 is the Nucleophile of the active site. The interval 441-460 (ENPPKRPHHRTAHGSWADSQ) is disordered. Catalysis depends on residues H448, D486, and E495. In terms of domain architecture, CBM3 1 spans 529-684 (VPEDEIFVEA…GVLVFGREPG (156 aa)). The disordered stretch occupies residues 684–730 (GSASKSTSKDNGLSKATPTVKTESQPTAKHTQNPASDFKTPANQNSV). Over residues 686–729 (ASKSTSKDNGLSKATPTVKTESQPTAKHTQNPASDFKTPANQNS) the composition is skewed to polar residues. Residues 736–887 (IKGEVVLQYA…SNKLVYGKEP (152 aa)) enclose the CBM3 2 domain.

It belongs to the glycosyl hydrolase 9 (cellulase E) family.

It carries out the reaction Endohydrolysis of (1-&gt;4)-beta-D-glucosidic linkages in cellulose, lichenin and cereal beta-D-glucans.. It functions in the pathway glycan metabolism; cellulose degradation. In terms of biological role, this enzyme catalyzes the endohydrolysis of 1,4-beta-glucosidic linkages in cellulose, lichenin and cereal beta-D-glucans. Principally active against barley beta-glucan. The polypeptide is Endoglucanase 1 (celI) (Acetivibrio thermocellus (strain ATCC 27405 / DSM 1237 / JCM 9322 / NBRC 103400 / NCIMB 10682 / NRRL B-4536 / VPI 7372) (Clostridium thermocellum)).